A 207-amino-acid polypeptide reads, in one-letter code: N-(5'-phosphoribosyl)anthranilate isomerase (207 aa).

It belongs to the TrpF family.

The catalysed reaction is N-(5-phospho-beta-D-ribosyl)anthranilate = 1-(2-carboxyphenylamino)-1-deoxy-D-ribulose 5-phosphate. The protein operates within amino-acid biosynthesis; L-tryptophan biosynthesis; L-tryptophan from chorismate: step 3/5. In Geotalea daltonii (strain DSM 22248 / JCM 15807 / FRC-32) (Geobacter daltonii), this protein is N-(5'-phosphoribosyl)anthranilate isomerase.